The chain runs to 241 residues: Adapter protein MecA (241 aa).

The interval 77–102 (KNTDEDDVADESQGDASVDSEHPDQV) is disordered. Residues 80-89 (DEDDVADESQ) are compositionally biased toward acidic residues.

It belongs to the MecA family. In terms of assembly, homodimer.

Functionally, enables the recognition and targeting of unfolded and aggregated proteins to the ClpC protease or to other proteins involved in proteolysis. This Levilactobacillus brevis (strain ATCC 367 / BCRC 12310 / CIP 105137 / JCM 1170 / LMG 11437 / NCIMB 947 / NCTC 947) (Lactobacillus brevis) protein is Adapter protein MecA.